The chain runs to 124 residues: Small ribosomal subunit protein uS12 (124 aa).

The interval 105–124 is disordered; the sequence is SGVNDRRQGRSKYGAKRPKS. Over residues 113 to 124 the composition is skewed to basic residues; that stretch reads GRSKYGAKRPKS.

Belongs to the universal ribosomal protein uS12 family. Part of the 30S ribosomal subunit. Contacts proteins S8 and S17. May interact with IF1 in the 30S initiation complex.

Functionally, with S4 and S5 plays an important role in translational accuracy. Its function is as follows. Interacts with and stabilizes bases of the 16S rRNA that are involved in tRNA selection in the A site and with the mRNA backbone. Located at the interface of the 30S and 50S subunits, it traverses the body of the 30S subunit contacting proteins on the other side and probably holding the rRNA structure together. The combined cluster of proteins S8, S12 and S17 appears to hold together the shoulder and platform of the 30S subunit. The protein is Small ribosomal subunit protein uS12 of Idiomarina loihiensis (strain ATCC BAA-735 / DSM 15497 / L2-TR).